We begin with the raw amino-acid sequence, 317 residues long: tRNA dimethylallyltransferase (317 aa).

An ATP-binding site is contributed by 18 to 25; the sequence is GPTATGKT. 20-25 lines the substrate pocket; the sequence is TATGKT. Interaction with substrate tRNA stretches follow at residues 43–46, 167–171, and 281–288; these read DSAL, QRIQR, and KRQITWLR.

It belongs to the IPP transferase family. Monomer. Mg(2+) serves as cofactor.

The catalysed reaction is adenosine(37) in tRNA + dimethylallyl diphosphate = N(6)-dimethylallyladenosine(37) in tRNA + diphosphate. Catalyzes the transfer of a dimethylallyl group onto the adenine at position 37 in tRNAs that read codons beginning with uridine, leading to the formation of N6-(dimethylallyl)adenosine (i(6)A). The protein is tRNA dimethylallyltransferase of Alkalilimnicola ehrlichii (strain ATCC BAA-1101 / DSM 17681 / MLHE-1).